The following is a 219-amino-acid chain: Protein Cmaq_0360 (219 aa).

The AMMECR1 domain occupies 8–204 (EQGKFLVRLA…EKGPRGDVYE (197 aa)).

This chain is Protein Cmaq_0360, found in Caldivirga maquilingensis (strain ATCC 700844 / DSM 13496 / JCM 10307 / IC-167).